The primary structure comprises 373 residues: Flagellar P-ring protein (373 aa).

The first 28 residues, 1–28 (MPSVSAVILKLAAAALSALLLSGVAANA), serve as a signal peptide directing secretion.

The protein belongs to the FlgI family. As to quaternary structure, the basal body constitutes a major portion of the flagellar organelle and consists of four rings (L,P,S, and M) mounted on a central rod.

It is found in the periplasm. Its subcellular location is the bacterial flagellum basal body. Assembles around the rod to form the L-ring and probably protects the motor/basal body from shearing forces during rotation. In Rhodopseudomonas palustris (strain HaA2), this protein is Flagellar P-ring protein.